The chain runs to 61 residues: uncharacterized protein (61 aa).

This is an uncharacterized protein from Saccharomyces cerevisiae (strain ATCC 204508 / S288c) (Baker's yeast).